The following is a 249-amino-acid chain: 3-deoxy-D-manno-octulosonic acid kinase (249 aa).

Asp-175 is a catalytic residue.

Belongs to the protein kinase superfamily. KdkA/RfaP family.

It localises to the cell inner membrane. The enzyme catalyses an alpha-Kdo-(2-&gt;6)-lipid IVA + ATP = a 4-O-phospho-alpha-Kdo-(2-&gt;6)-lipid IVA + ADP + H(+). It functions in the pathway bacterial outer membrane biogenesis; LPS core biosynthesis. In terms of biological role, catalyzes the ATP-dependent phosphorylation of the 3-deoxy-D-manno-octulosonic acid (Kdo) residue in Kdo-lipid IV(A) at the 4-OH position. This is 3-deoxy-D-manno-octulosonic acid kinase from Stenotrophomonas maltophilia (strain R551-3).